Here is a 3330-residue protein sequence, read N- to C-terminus: Laminin subunit alpha-3 (3330 aa).

Residues 1–31 (MAVALGRAPRSLPLLLTLLLLLLLRMSPSWS) form the signal peptide. Residues 40-295 (SSRSLHPPYF…SIKDISVGGR (256 aa)) enclose the Laminin N-terminal domain. Residue N139 is glycosylated (N-linked (GlcNAc...) asparagine). The interval 295 to 725 (RCVCNGHAEA…NNYYFPDLHH (431 aa)) is domain V. Intrachain disulfides connect C296-C305, C298-C316, C318-C327, C330-C350, C353-C362, C355-C387, C390-C399, C402-C420, C423-C433, C425-C440, C442-C451, C454-C464, C488-C500, C490-C506, C508-C517, C520-C530, C533-C545, C535-C552, C554-C563, C566-C583, C628-C642, C630-C649, C651-C660, C663-C678, C681-C693, C683-C700, and C702-C711. Laminin EGF-like domains follow at residues 296-350 (CVCN…HNEC), 353-420 (CNCH…LHGC), 423-464 (CSCD…FPFC), 488-530 (CDCN…FPIC), 533-576 (CQCS…FPYC), 582-625 (VCHP…PRGC), 628-678 (CQCH…YFGC), and 681-725 (CQCD…DLHH). N-linked (GlcNAc...) asparagine glycosylation occurs at N445. A domain IV 1 (domain IV B) region spans residues 793–1262 (TEAISGRITL…VAFYHNGAIP (470 aa)). Positions 1263–1462 (CECDPAGTAG…CFCFGVNTDC (200 aa)) are domain III B. 12 cysteine pairs are disulfide-bonded: C1309/C1316, C1311/C1323, C1325/C1334, C1337/C1350, C1353/C1368, C1355/C1375, C1377/C1386, C1389/C1399, C1402/C1414, C1404/C1421, C1423/C1432, and C1435/C1450. 3 consecutive Laminin EGF-like domains span residues 1309–1352 (CNCG…GCDV), 1353–1401 (CNCS…ECVP), and 1402–1452 (CSCN…GCTK). N-linked (GlcNAc...) asparagine glycosylation is present at N1354. The 10-residue stretch at 1453-1462 (CFCFGVNTDC) folds into the Laminin EGF-like 12; first part domain. The region spanning 1466-1650 (HKQRAKFVDM…SGPRAHLVEM (185 aa)) is the Laminin IV type A domain. Residues 1651-1683 (CACPPDYTGDSCQGCRPGYYWDNKSLPVGRCVP) enclose the Laminin EGF-like 12; second part domain. Positions 1651-1818 (CACPPDYTGD…DGSPAEECDD (168 aa)) are domain III A. Residue N1673 is glycosylated (N-linked (GlcNAc...) asparagine). 8 disulfide bridges follow: C1684-C1693, C1686-C1700, C1703-C1712, C1715-C1728, C1731-C1743, C1733-C1752, C1754-C1763, and C1766-C1781. Laminin EGF-like domains follow at residues 1684 to 1730 (CNCN…SCRV) and 1731 to 1783 (CPCP…SCQP). Residues 1784-1818 (CNCNSNGQLGPCDPLTGDCVNQEPKDGSPAEECDD) enclose the Laminin EGF-like 15; truncated domain. Residues 1819–2385 (CDSCVMTLLN…ARDAANKVAI (567 aa)) are domain II and I. Coiled-coil stretches lie at residues 1851–1980 (TGAL…LRSR), 2012–2057 (VENN…HENE), 2088–2165 (LLQT…GDEL), and 2211–2238 (KRAK…QQVS). The N-linked (GlcNAc...) asparagine glycan is linked to N2159. N-linked (GlcNAc...) asparagine glycosylation is present at N2261. A Cell attachment site motif is present at residues 2274-2276 (RGD). Positions 2318-2383 (SARREDFSKA…QQARDAANKV (66 aa)) form a coiled coil. N-linked (GlcNAc...) asparagine glycosylation is found at N2332, N2361, N2498, N2580, and N2747. Laminin G-like domains are found at residues 2386-2587 (PMRF…VEPC), 2594-2756 (SDKN…TKKC), 2763-2923 (VRTA…LGGC), 2983-3147 (ALQF…VSPC), and 3154-3327 (KGIY…LNGC). 3 cysteine pairs are disulfide-bonded: C2557/C2587, C2733/C2756, and C2891/C2923. Residue N3094 is glycosylated (N-linked (GlcNAc...) asparagine). The cysteines at positions 3124 and 3147 are disulfide-linked. The N-linked (GlcNAc...) asparagine glycan is linked to N3270. C3299 and C3327 are disulfide-bonded.

As to quaternary structure, laminin is a complex glycoprotein, consisting of three different polypeptide chains (alpha, beta, gamma), which are bound to each other by disulfide bonds into a cross-shaped molecule comprising one long and three short arms with globules at each end. Alpha-3 is a subunit of laminin-5 (laminin-332 or epiligrin/kalinin/nicein), laminin-6 (laminin-311 or K-laminin) and laminin-7 (laminin-321 or KS-laminin). As to expression, basal membrane of the upper alimentary tract and urinary and nasal epithelia, salivary glands and teeth (both variants). Isoform A is predominantly expressed in skin, hair follicles and developing neurons of the trigeminal ganglion. Isoform B was found in bronchi, alveoli, stomach, intestinal crypts, whisker pads, CNS, telencephalic neuroectoderm, thalamus, Rathke pouch and periventricular subependymal germinal layer.

The protein resides in the secreted. Its subcellular location is the extracellular space. It is found in the extracellular matrix. It localises to the basement membrane. Its function is as follows. Binding to cells via a high affinity receptor, laminin is thought to mediate the attachment, migration and organization of cells into tissues during embryonic development by interacting with other extracellular matrix components. Laminin-5 is thought to be involved in (1) cell adhesion via integrin alpha-3/beta-1 in focal adhesion and integrin alpha-6/beta-4 in hemidesmosomes, (2) signal transduction via tyrosine phosphorylation of pp125-FAK and p80, (3) differentiation of keratinocytes. The protein is Laminin subunit alpha-3 (Lama3) of Mus musculus (Mouse).